The primary structure comprises 848 residues: Translation initiation factor IF-2 (848 aa).

The tract at residues 90 to 253 (RTYIKRAELQ…PKEKRHAFER (164 aa)) is disordered. Positions 105–170 (EAPAPEEPVQ…SAEPAIAPED (66 aa)) are enriched in low complexity. 2 stretches are compositionally biased toward basic residues: residues 204–215 (PKKKQAGHRGPR) and 236–248 (KPLR…KEKR). The region spanning 344–511 (KRAPVVSVMG…AVLLQAEILE (168 aa)) is the tr-type G domain. The tract at residues 353–360 (GHVDHGKT) is G1. 353–360 (GHVDHGKT) serves as a coordination point for GTP. A G2 region spans residues 378–382 (GITQH). A G3 region spans residues 399–402 (DTPG). Residues 399–403 (DTPGH) and 453–456 (NKMD) contribute to the GTP site. The segment at 453–456 (NKMD) is G4. The tract at residues 489–491 (SAH) is G5.

Belongs to the TRAFAC class translation factor GTPase superfamily. Classic translation factor GTPase family. IF-2 subfamily.

The protein localises to the cytoplasm. One of the essential components for the initiation of protein synthesis. Protects formylmethionyl-tRNA from spontaneous hydrolysis and promotes its binding to the 30S ribosomal subunits. Also involved in the hydrolysis of GTP during the formation of the 70S ribosomal complex. The chain is Translation initiation factor IF-2 from Marinobacter nauticus (strain ATCC 700491 / DSM 11845 / VT8) (Marinobacter aquaeolei).